Here is a 152-residue protein sequence, read N- to C-terminus: Deoxyuridine 5'-triphosphate nucleotidohydrolase (152 aa).

Residues 71-73 (RSG), Asn84, and 88-90 (TID) each bind substrate.

It belongs to the dUTPase family. Requires Mg(2+) as cofactor.

It carries out the reaction dUTP + H2O = dUMP + diphosphate + H(+). It functions in the pathway pyrimidine metabolism; dUMP biosynthesis; dUMP from dCTP (dUTP route): step 2/2. In terms of biological role, this enzyme is involved in nucleotide metabolism: it produces dUMP, the immediate precursor of thymidine nucleotides and it decreases the intracellular concentration of dUTP so that uracil cannot be incorporated into DNA. This chain is Deoxyuridine 5'-triphosphate nucleotidohydrolase, found in Roseobacter denitrificans (strain ATCC 33942 / OCh 114) (Erythrobacter sp. (strain OCh 114)).